The sequence spans 188 residues: Trafficking protein particle complex subunit 5 (188 aa).

Serine 10 is modified (phosphoserine).

This sequence belongs to the TRAPP small subunits family. BET3 subfamily. In terms of assembly, component of the multisubunit TRAPP (transport protein particle) complex, which includes at least TRAPPC2, TRAPPC2L, TRAPPC3, TRAPPC3L, TRAPPC4, TRAPPC5, TRAPPC8, TRAPPC9, TRAPPC10, TRAPPC11 and TRAPPC12.

It localises to the golgi apparatus. The protein localises to the cis-Golgi network. Its subcellular location is the endoplasmic reticulum. Functionally, may play a role in vesicular transport from endoplasmic reticulum to Golgi. The polypeptide is Trafficking protein particle complex subunit 5 (Trappc5) (Mus musculus (Mouse)).